Reading from the N-terminus, the 155-residue chain is Small ribosomal subunit protein uS7cz/uS7cy (155 aa).

It belongs to the universal ribosomal protein uS7 family. As to quaternary structure, part of the 30S ribosomal subunit.

It is found in the plastid. It localises to the chloroplast. Its function is as follows. One of the primary rRNA binding proteins, it binds directly to 16S rRNA where it nucleates assembly of the head domain of the 30S subunit. The polypeptide is Small ribosomal subunit protein uS7cz/uS7cy (rps7-A) (Phaseolus vulgaris (Kidney bean)).